Here is a 148-residue protein sequence, read N- to C-terminus: Endoribonuclease YbeY (148 aa).

The Zn(2+) site is built by His113, His117, and His123.

The protein belongs to the endoribonuclease YbeY family. Zn(2+) is required as a cofactor.

It localises to the cytoplasm. In terms of biological role, single strand-specific metallo-endoribonuclease involved in late-stage 70S ribosome quality control and in maturation of the 3' terminus of the 16S rRNA. This chain is Endoribonuclease YbeY, found in Borrelia duttonii (strain Ly).